The following is a 196-amino-acid chain: Histone H1.0 (196 aa).

Disordered stretches follow at residues 1–29 (MTEN…PKYS) and 78–196 (SGTL…GRKK). The H15 domain occupies 24–97 (DHPKYSDMIL…GASGSFRLAK (74 aa)). The segment covering 104 to 196 (PAKKPKKEIK…ASPKKSGRKK (93 aa)) has biased composition (basic residues).

This sequence belongs to the histone H1/H5 family.

The protein resides in the nucleus. It is found in the chromosome. Its function is as follows. Histones H1 are necessary for the condensation of nucleosome chains into higher-order structures. The histones H1.0 are found in cells that are in terminal stages of differentiation or that have low rates of cell division. This chain is Histone H1.0 (h1-0), found in Xenopus tropicalis (Western clawed frog).